A 205-amino-acid polypeptide reads, in one-letter code: Dephospho-CoA kinase (205 aa).

The DPCK domain occupies 3–204 (KVGLTGGIGA…HRAHQPGESQ (202 aa)). 11-16 (GAGKSE) contacts ATP.

It belongs to the CoaE family.

It localises to the cytoplasm. It catalyses the reaction 3'-dephospho-CoA + ATP = ADP + CoA + H(+). It functions in the pathway cofactor biosynthesis; coenzyme A biosynthesis; CoA from (R)-pantothenate: step 5/5. Catalyzes the phosphorylation of the 3'-hydroxyl group of dephosphocoenzyme A to form coenzyme A. This Streptomyces avermitilis (strain ATCC 31267 / DSM 46492 / JCM 5070 / NBRC 14893 / NCIMB 12804 / NRRL 8165 / MA-4680) protein is Dephospho-CoA kinase.